The sequence spans 441 residues: C4-dicarboxylate transport protein (441 aa).

The next 8 helical transmembrane spans lie at 9–29, 45–65, 79–99, 145–165, 187–207, 220–240, 308–328, and 356–376; these read SLYFQVIVAIICGVLLGHFMP, LVKMMITPIIFCTVVVGIAGM, LLYFEVVTTLALIIGLVVVNV, AFAEGEILQVLLFSVLFGFAL, FAAIGFIMKLAPIGAFGAMAF, LAALMGSFYLTCLLFIGLVLG, IYLTMAAIFIAQACGIELTLT, and AATLATVPDIPVAGLALILGI.

This sequence belongs to the dicarboxylate/amino acid:cation symporter (DAACS) (TC 2.A.23) family.

The protein resides in the cell inner membrane. Functionally, responsible for the transport of dicarboxylates such as succinate, fumarate, and malate from the periplasm across the membrane. In Laribacter hongkongensis (strain HLHK9), this protein is C4-dicarboxylate transport protein.